A 206-amino-acid polypeptide reads, in one-letter code: Tetrathionate response regulatory protein TtrR (206 aa).

Residues 3 to 117 (TIHLLDDDTA…PLQAALERAL (115 aa)) form the Response regulatory domain. D52 is subject to 4-aspartylphosphate. The HTH luxR-type domain maps to 134 to 194 (QQLTPKEREL…ELIRRFEKMA (61 aa)). Positions 153–172 (NREIAEAMNIAVRTVEVHRA) form a DNA-binding region, H-T-H motif.

In terms of processing, phosphorylated by TtrS.

The protein resides in the cytoplasm. Member of the two-component regulatory system TtrR/TtrS, which is required for synthesis of tetrathionate reductase. Positively regulates transcription of the ttrBCA operon. During mice infection, the ability to use tetrathionate as an electron acceptor is a growth advantage for S.typhimurium over the competing microbiota in the lumen of the inflamed gut. This Salmonella typhimurium (strain LT2 / SGSC1412 / ATCC 700720) protein is Tetrathionate response regulatory protein TtrR (ttrR).